A 259-amino-acid chain; its full sequence is GTP cyclohydrolase FolE2 (259 aa).

The protein belongs to the GTP cyclohydrolase IV family.

The catalysed reaction is GTP + H2O = 7,8-dihydroneopterin 3'-triphosphate + formate + H(+). It functions in the pathway cofactor biosynthesis; 7,8-dihydroneopterin triphosphate biosynthesis; 7,8-dihydroneopterin triphosphate from GTP: step 1/1. In terms of biological role, converts GTP to 7,8-dihydroneopterin triphosphate. The sequence is that of GTP cyclohydrolase FolE2 from Nitratidesulfovibrio vulgaris (strain DSM 19637 / Miyazaki F) (Desulfovibrio vulgaris).